Here is a 757-residue protein sequence, read N- to C-terminus: Xaa-Pro dipeptidyl-peptidase (757 aa).

Active-site charge relay system residues include Ser348, Asp468, and His498.

Belongs to the peptidase S15 family. As to quaternary structure, homodimer.

The protein localises to the cytoplasm. It carries out the reaction Hydrolyzes Xaa-Pro-|- bonds to release unblocked, N-terminal dipeptides from substrates including Ala-Pro-|-p-nitroanilide and (sequentially) Tyr-Pro-|-Phe-Pro-|-Gly-Pro-|-Ile.. Removes N-terminal dipeptides sequentially from polypeptides having unsubstituted N-termini provided that the penultimate residue is proline. The polypeptide is Xaa-Pro dipeptidyl-peptidase (Streptococcus pneumoniae serotype 19F (strain G54)).